Here is a 162-residue protein sequence, read N- to C-terminus: uncharacterized protein (162 aa).

The next 4 helical transmembrane spans lie at 15–35, 43–63, 70–90, and 97–117; these read VLAIFIVLLIISAYLGFAPAL, VCHFFVFFLLTLVFYWVFDLS, LTILVCGVFGGLGSEFVQSFL, and LFDIVANLLGCSLALLLNILY.

It localises to the membrane. This is an uncharacterized protein from Schizosaccharomyces pombe (strain 972 / ATCC 24843) (Fission yeast).